A 113-amino-acid chain; its full sequence is Hydrogenase maturation factor HypA (113 aa).

Ni(2+) is bound at residue His-2. 4 residues coordinate Zn(2+): Cys-73, Cys-76, Cys-89, and Cys-92.

It belongs to the HypA/HybF family.

Its function is as follows. Involved in the maturation of [NiFe] hydrogenases. Required for nickel insertion into the metal center of the hydrogenase. This is Hydrogenase maturation factor HypA from Cereibacter sphaeroides (strain KD131 / KCTC 12085) (Rhodobacter sphaeroides).